A 55-amino-acid chain; its full sequence is Large ribosomal subunit protein bL33 (55 aa).

It belongs to the bacterial ribosomal protein bL33 family.

This Agrobacterium fabrum (strain C58 / ATCC 33970) (Agrobacterium tumefaciens (strain C58)) protein is Large ribosomal subunit protein bL33.